The chain runs to 275 residues: Ribosomal RNA small subunit methyltransferase A (275 aa).

S-adenosyl-L-methionine contacts are provided by asparagine 21, leucine 23, glycine 48, glutamate 69, aspartate 94, and asparagine 115.

It belongs to the class I-like SAM-binding methyltransferase superfamily. rRNA adenine N(6)-methyltransferase family. RsmA subfamily.

It is found in the cytoplasm. It carries out the reaction adenosine(1518)/adenosine(1519) in 16S rRNA + 4 S-adenosyl-L-methionine = N(6)-dimethyladenosine(1518)/N(6)-dimethyladenosine(1519) in 16S rRNA + 4 S-adenosyl-L-homocysteine + 4 H(+). In terms of biological role, specifically dimethylates two adjacent adenosines (A1518 and A1519) in the loop of a conserved hairpin near the 3'-end of 16S rRNA in the 30S particle. May play a critical role in biogenesis of 30S subunits. The sequence is that of Ribosomal RNA small subunit methyltransferase A from Clostridium botulinum (strain ATCC 19397 / Type A).